The primary structure comprises 490 residues: UDP-glycosyltransferase 73C7 (490 aa).

UDP-alpha-D-glucose is bound by residues serine 291, 351-353 (APQ), 368-376 (HCGWNSTLE), and 390-393 (FAEQ).

Belongs to the UDP-glycosyltransferase family.

In Arabidopsis thaliana (Mouse-ear cress), this protein is UDP-glycosyltransferase 73C7 (UGT73C7).